Reading from the N-terminus, the 407-residue chain is [Pyruvate dehydrogenase (acetyl-transferring)] kinase isozyme 2, mitochondrial (407 aa).

The region spanning 135-364 is the Histidine kinase domain; that stretch reads LEYKDTYGDD…DAVIYLKALS (230 aa). Phosphotyrosine occurs at positions 215 and 216. ATP is bound by residues 251–258, Asp290, 309–310, and 325–330; these read ELFKNAMR, ST, and GFGYGL. Lys376 carries the N6-succinyllysine modification.

Belongs to the PDK/BCKDK protein kinase family. As to quaternary structure, homodimer, and heterodimer with PDK1. Interacts with the pyruvate dehydrogenase complex subunit DLAT, and is part of the multimeric pyruvate dehydrogenase complex that contains multiple copies of pyruvate dehydrogenase (E1), dihydrolipoamide acetyltransferase (DLAT, E2) and lipoamide dehydrogenase (DLD, E3). In terms of tissue distribution, detected in heart (at protein level). Highest level of expression in heart and skeletal muscle and the lowest in spleen and lung. Liver, kidney, brain and testis levels are intermediate.

It is found in the mitochondrion matrix. The catalysed reaction is L-seryl-[pyruvate dehydrogenase E1 alpha subunit] + ATP = O-phospho-L-seryl-[pyruvate dehydrogenase E1 alpha subunit] + ADP + H(+). With respect to regulation, activity increases in response to increased acetyl-CoA and NADH levels and upon binding to the pyruvate dehydrogenase subunit DLAT. Inhibited by ADP and pyruvate; these compounds interfere with DLAT binding and thereby inhibit kinase activity. Inhibited by dichloroacetate. Inhibited by AZD7545; this compound interferes with DLAT binding and thereby inhibits kinase activity. Reactive oxygen species cause the formation of disulfide bonds, and thereby inhibit the enzyme. In terms of biological role, kinase that plays a key role in the regulation of glucose and fatty acid metabolism and homeostasis via phosphorylation of the pyruvate dehydrogenase subunits PDHA1 and PDHA2. This inhibits pyruvate dehydrogenase activity, and thereby regulates metabolite flux through the tricarboxylic acid cycle, down-regulates aerobic respiration and inhibits the formation of acetyl-coenzyme A from pyruvate. Inhibition of pyruvate dehydrogenase decreases glucose utilization and increases fat metabolism. Mediates cellular responses to insulin. Plays an important role in maintaining normal blood glucose levels and in metabolic adaptation to nutrient availability. Via its regulation of pyruvate dehydrogenase activity, plays an important role in maintaining normal blood pH and in preventing the accumulation of ketone bodies under starvation. Plays a role in the regulation of cell proliferation and in resistance to apoptosis under oxidative stress. Plays a role in p53/TP53-mediated apoptosis. The sequence is that of [Pyruvate dehydrogenase (acetyl-transferring)] kinase isozyme 2, mitochondrial (Pdk2) from Rattus norvegicus (Rat).